Here is a 260-residue protein sequence, read N- to C-terminus: Hydroxyethylthiazole kinase 1 (260 aa).

Met39 serves as a coordination point for substrate. Positions 115 and 160 each coordinate ATP. Gly187 is a binding site for substrate.

The protein belongs to the Thz kinase family. Requires Mg(2+) as cofactor.

The catalysed reaction is 5-(2-hydroxyethyl)-4-methylthiazole + ATP = 4-methyl-5-(2-phosphooxyethyl)-thiazole + ADP + H(+). It participates in cofactor biosynthesis; thiamine diphosphate biosynthesis; 4-methyl-5-(2-phosphoethyl)-thiazole from 5-(2-hydroxyethyl)-4-methylthiazole: step 1/1. Its function is as follows. Catalyzes the phosphorylation of the hydroxyl group of 4-methyl-5-beta-hydroxyethylthiazole (THZ). The sequence is that of Hydroxyethylthiazole kinase 1 from Streptococcus pneumoniae serotype 4 (strain ATCC BAA-334 / TIGR4).